We begin with the raw amino-acid sequence, 188 residues long: UPF0340 protein SSU98_0310 (188 aa).

This sequence belongs to the UPF0340 family.

The sequence is that of UPF0340 protein SSU98_0310 from Streptococcus suis (strain 98HAH33).